A 259-amino-acid polypeptide reads, in one-letter code: Cytosolic Fe-S cluster assembly factor Nubp2 homolog (259 aa).

Gly14–Ser21 is a binding site for ATP. [4Fe-4S] cluster contacts are provided by Cys188 and Cys191.

The protein belongs to the Mrp/NBP35 ATP-binding proteins family. NUBP2/CFD1 subfamily. In terms of assembly, heterotetramer of 2 Nubp1 and 2 Nubp2 chains. Requires [4Fe-4S] cluster as cofactor.

It is found in the cytoplasm. In terms of biological role, component of the cytosolic iron-sulfur (Fe/S) protein assembly (CIA) machinery. Required for maturation of extramitochondrial Fe-S proteins. The Nubp1-Nubp2 heterotetramer forms a Fe-S scaffold complex, mediating the de novo assembly of an Fe-S cluster and its transfer to target apoproteins. The protein is Cytosolic Fe-S cluster assembly factor Nubp2 homolog of Anopheles gambiae (African malaria mosquito).